The sequence spans 1411 residues: MFRRILQRTPGRVGSQGSDLDSSATPINTVDVNNESSSEGFICPQCMKSLGSADELFKHYQAVHDAGNDSGHGGEAGLALTRDDITLLRQEVQDLQASLKEEKWYSEELKKELEKYQGLQQQEAKSDGLVTDSSAELQALEQQLEEAQTENFNIKQMKDLFEQKAAQLATEIADIKSKYDEEKSLRAAAEQKVTHLTEDLNKQTTVIQDLKTELLQRPGIEDVAVLKKELVQVQTLMDNMTLERERESEKLKDECKKLQSEHAHLEATINQLRSELAKGPQEVAVYVQEIQKLKGSINELTQKNQNLTEKLQKKDLDYTHLEEKHNEESASRKTLQASLHQRDLDCQQLQARLTASESSLQRAQGELSEKAEAAQKLREELREVESTRQHLKVEVKQLQQQREEKEQHGLQLQGEVSQLHCKLLETERQLGEAHGRLKEQRQLSSEKLMEKEQQVADLQLKLSRLEEQLKEKVTNSTELQHQLEKSKQQHQEQQALQQSATAKLREAQNDLEQVLRQIGDKDQKIQNLEALLQKGKESVSLLEKEREDLYAKIQAGEGETAVLNQLQEKNHALQQQLTQLTEKLKNQSESHKQAEENLHDQVQEQKAHLRAAQDRVLSLETSVSELSSQLNESKEKVSQLDIQIKAKTELLLSAEAAKAAQRADLQNHLDTAQHALQDKQQELNKVSVQLDQLTAKFQEKQEHCIQLESHLKDHKEKHLSLEQKVEDLEGHIKKLEADALEVKASKEQALQSLQQQRQLSTDLELRNAELSRELQEQEEVVSCTKLDLQNKSEILENIKQTLTKKEEENVVLKQEFEKLSQDSKTQHKELGDRMQAAVTELTAVKAQKDALLAELSTTKEKLSKVSDSLKNSKSEFEKENQKGKAAVLDLEKACKELKHQLQVQAESALKEQEDLKKSLEKEKETSQQLKIELNSVKGEVSQAQNTLKQKEKDEQQLQGTINQLKQSAEQKKKQIEALQGEVKNAVSQKTVLENKLQQQSSQAAQELAAEKGKLSALQSNYEKCQADLKQLQSDLYGKESELLATRQDLKSVEEKLTLAQEDLISNRNQIGNQNKSIQELQAAKASLEQDSAKKEALLKEQSKALEDAQREKSVKEKELVAEKSKLAEMEEIKCRQEKEITKLNEELKSHKQESIKEITNLKDAKQLLIQQKLELQGRVDSLKAALEQEKESQQLMREQVKKEEEKRKEEFSEKEAKLHSEIKEKEAGMKKHEENEAKLTMQVTTLNENLGTVKKEWQSSQRRVSELEKQTDDLRGEIAVLEATVQNNQDERRALLERCLKGEGEIEKLQTKALELQRKLDNTTAAVQELGRENQSLQIKHTQALNRKWAEDNEVQNCMSCGKCFSVTVRRHHCRQCGNIFCAECSTKNALTPSSKKPVRVCDACFNDLQG.

The segment at 1–27 (MFRRILQRTPGRVGSQGSDLDSSATPI) is disordered. Over residues 15–27 (SQGSDLDSSATPI) the composition is skewed to polar residues. The segment at 41–64 (FICPQCMKSLGSADELFKHYQAVH) adopts a C2H2-type zinc-finger fold. Phosphoserine is present on residues Ser-52 and Ser-70. Residues 78–1348 (LALTRDDITL…IKHTQALNRK (1271 aa)) are a coiled coil. Disordered regions lie at residues 476 to 501 (STEL…QSAT) and 1189 to 1217 (EKES…KEAK). The segment covering 481–490 (HQLEKSKQQH) has biased composition (basic and acidic residues). A compositionally biased stretch (low complexity) spans 491 to 500 (QEQQALQQSA). An FYVE-type zinc finger spans residues 1352-1410 (DNEVQNCMSCGKCFSVTVRRHHCRQCGNIFCAECSTKNALTPSSKKPVRVCDACFNDLQ). Zn(2+) is bound by residues Cys-1358, Cys-1361, Cys-1374, Cys-1377, Cys-1382, Cys-1385, Cys-1402, and Cys-1405.

As to quaternary structure, homodimer. Binds STX6. Binds RAB5A, RAB5B, RAB5C and RAB22A that have been activated by GTP-binding. Interacts with ERBB2. Interacts with RAB31. Interacts with SAMD9 and SAMD9L. May interact with PLEKHF2.

Its subcellular location is the cytoplasm. The protein resides in the early endosome membrane. In terms of biological role, binds phospholipid vesicles containing phosphatidylinositol 3-phosphate and participates in endosomal trafficking. In Mus musculus (Mouse), this protein is Early endosome antigen 1 (Eea1).